The following is a 493-amino-acid chain: Argininosuccinate lyase (493 aa).

It belongs to the lyase 1 family. Argininosuccinate lyase subfamily.

It is found in the cytoplasm. The catalysed reaction is 2-(N(omega)-L-arginino)succinate = fumarate + L-arginine. It participates in amino-acid biosynthesis; L-arginine biosynthesis; L-arginine from L-ornithine and carbamoyl phosphate: step 3/3. The sequence is that of Argininosuccinate lyase from Methanospirillum hungatei JF-1 (strain ATCC 27890 / DSM 864 / NBRC 100397 / JF-1).